Reading from the N-terminus, the 201-residue chain is 5'(3')-deoxyribonucleotidase, cytosolic type (201 aa).

Aspartate 10 serves as the catalytic Nucleophile. Aspartate 10 and aspartate 12 together coordinate Mg(2+). The active-site Proton donor is aspartate 12. Substrate contacts are provided by phenylalanine 18, phenylalanine 44, tyrosine 65, threonine 99, and lysine 134. Aspartate 145 serves as a coordination point for Mg(2+). Residue serine 182 is modified to Phosphoserine.

Belongs to the 5'(3')-deoxyribonucleotidase family. Homodimer. Mg(2+) serves as cofactor. Detected in skeletal muscle, heart and pancreas.

The protein localises to the cytoplasm. Its function is as follows. Dephosphorylates the 5' and 2'(3')-phosphates of deoxyribonucleotides, with a preference for dUMP and dTMP, intermediate activity towards dGMP, and low activity towards dCMP and dAMP. This chain is 5'(3')-deoxyribonucleotidase, cytosolic type (NT5C), found in Homo sapiens (Human).